A 227-amino-acid chain; its full sequence is Superoxide dismutase [Cu-Zn] (227 aa).

Positions 1-19 (MPKLLPPVVLAGCVVALGA) are cleaved as a signal peptide. A lipid anchor (N-palmitoyl cysteine) is attached at C20. The S-diacylglycerol cysteine moiety is linked to residue C20. A disordered region spans residues 23–55 (PQHASSLPGTTPAVWTGSPSPSGAGAAEAAPAA). Residues 39–55 (GSPSPSGAGAAEAAPAA) show a composition bias toward low complexity. Cu cation is bound by residues H103 and H105. Cysteines 110 and 221 form a disulfide. A Zn(2+)-binding site is contributed by D145. H182 lines the Cu cation pocket.

It belongs to the Cu-Zn superoxide dismutase family. Requires Cu cation as cofactor. Zn(2+) serves as cofactor.

The protein localises to the cell membrane. It carries out the reaction 2 superoxide + 2 H(+) = H2O2 + O2. Functionally, destroys radicals which are normally produced within the cells and which are toxic to biological systems. May play a role in favoring mycobacterial survival in phagocytes. The chain is Superoxide dismutase [Cu-Zn] (sodC) from Mycolicibacterium paratuberculosis (strain ATCC BAA-968 / K-10) (Mycobacterium paratuberculosis).